The following is a 159-amino-acid chain: Cytochrome b6-f complex subunit 4 (159 aa).

Helical transmembrane passes span 36 to 56, 95 to 115, and 131 to 151; these read LLYI…GLAV, LLGV…PFLE, and TVFL…TLPI.

The protein belongs to the cytochrome b family. PetD subfamily. In terms of assembly, the 4 large subunits of the cytochrome b6-f complex are cytochrome b6, subunit IV (17 kDa polypeptide, petD), cytochrome f and the Rieske protein, while the 4 small subunits are petG, petL, petM and petN. The complex functions as a dimer.

The protein resides in the plastid. Its subcellular location is the chloroplast thylakoid membrane. In terms of biological role, component of the cytochrome b6-f complex, which mediates electron transfer between photosystem II (PSII) and photosystem I (PSI), cyclic electron flow around PSI, and state transitions. The chain is Cytochrome b6-f complex subunit 4 from Piper cenocladum (Ant piper).